Here is a 167-residue protein sequence, read N- to C-terminus: MAASVCSGLLGPRVLSWSRELPCAWRALHTSPVCAKNRAARVRVSKGDKPVTYEEAHAPHYIAHRKGWLSLHTGNLDGEDHAAERTVEDVFLRKFMWGTFPGCLADQLVLKRRGNQLEICAVVLRQLSPHKYYFLVGYSETLLSYFYKCPVRLHLQTVPSKVVYKYL.

The transit peptide at 1 to 35 directs the protein to the mitochondrion; it reads MAASVCSGLLGPRVLSWSRELPCAWRALHTSPVCA.

The protein belongs to the universal ribosomal protein uS3 family. As to quaternary structure, component of the mitochondrial small ribosomal subunit (mt-SSU). Mature mammalian 55S mitochondrial ribosomes consist of a small (28S) and a large (39S) subunit. The 28S small subunit contains a 12S ribosomal RNA (12S mt-rRNA) and 30 different proteins. The 39S large subunit contains a 16S rRNA (16S mt-rRNA), a copy of mitochondrial valine transfer RNA (mt-tRNA(Val)), which plays an integral structural role, and 52 different proteins.

It is found in the mitochondrion. This Homo sapiens (Human) protein is Small ribosomal subunit protein uS3m (MRPS24).